Consider the following 171-residue polypeptide: Crossover junction endodeoxyribonuclease RuvC (171 aa).

Catalysis depends on residues aspartate 7, glutamate 74, and aspartate 147. 3 residues coordinate Mg(2+): aspartate 7, glutamate 74, and aspartate 147.

The protein belongs to the RuvC family. Homodimer which binds Holliday junction (HJ) DNA. The HJ becomes 2-fold symmetrical on binding to RuvC with unstacked arms; it has a different conformation from HJ DNA in complex with RuvA. In the full resolvosome a probable DNA-RuvA(4)-RuvB(12)-RuvC(2) complex forms which resolves the HJ. The cofactor is Mg(2+).

Its subcellular location is the cytoplasm. It carries out the reaction Endonucleolytic cleavage at a junction such as a reciprocal single-stranded crossover between two homologous DNA duplexes (Holliday junction).. Functionally, the RuvA-RuvB-RuvC complex processes Holliday junction (HJ) DNA during genetic recombination and DNA repair. Endonuclease that resolves HJ intermediates. Cleaves cruciform DNA by making single-stranded nicks across the HJ at symmetrical positions within the homologous arms, yielding a 5'-phosphate and a 3'-hydroxyl group; requires a central core of homology in the junction. The consensus cleavage sequence is 5'-(A/T)TT(C/G)-3'. Cleavage occurs on the 3'-side of the TT dinucleotide at the point of strand exchange. HJ branch migration catalyzed by RuvA-RuvB allows RuvC to scan DNA until it finds its consensus sequence, where it cleaves and resolves the cruciform DNA. The polypeptide is Crossover junction endodeoxyribonuclease RuvC (Acidobacterium capsulatum (strain ATCC 51196 / DSM 11244 / BCRC 80197 / JCM 7670 / NBRC 15755 / NCIMB 13165 / 161)).